We begin with the raw amino-acid sequence, 203 residues long: Guanylate kinase (203 aa).

In terms of domain architecture, Guanylate kinase-like spans 3–181 (GSLFIVAAPS…AHTDLRAIVQ (179 aa)). An ATP-binding site is contributed by 10-17 (APSGAGKT).

The protein belongs to the guanylate kinase family.

Its subcellular location is the cytoplasm. It carries out the reaction GMP + ATP = GDP + ADP. Its function is as follows. Essential for recycling GMP and indirectly, cGMP. The sequence is that of Guanylate kinase from Nitrosococcus oceani (strain ATCC 19707 / BCRC 17464 / JCM 30415 / NCIMB 11848 / C-107).